The sequence spans 210 residues: T-cell surface glycoprotein CD8 beta chain (210 aa).

A signal peptide spans 1 to 21 (MQPGLWLLLATQLAALRGSSV). Residues 22-132 (LQQAPGSVMV…ELTFGKGTRL (111 aa)) form the Ig-like V-type domain. Over 22–170 (LQQAPGSVMV…VTQKGPSCGL (149 aa)) the chain is Extracellular. Residues C41 and C116 are joined by a disulfide bond. N102 is a glycosylation site (N-linked (GlcNAc...) asparagine). Residues 139–161 (PTNSQPTKKPTPRKKMCRPPSPV) form a disordered region. A helical transmembrane segment spans residues 171–191 (LTLGLLVAGVLVLLVSLGVAI). Residues 192–210 (HLYRLKRRARLRLLKQFYK) are Cytoplasmic-facing.

Forms disulfide-linked heterodimers with CD8A at the cell surface. Interacts with CD3D; this interaction couples TCR-CD3 with CD8. Interacts with LCK. Phosphorylated as a consequence of T-cell activation. In terms of processing, palmitoylated at the cytoplasmic tail and thereby targets the heterodimer CD8A/CD8B to lipid rafts unlike CD8A homodimers.

Its subcellular location is the cell membrane. In terms of biological role, integral membrane glycoprotein that plays an essential role in the immune response and serves multiple functions in responses against both external and internal offenses. In T-cells, functions primarily as a coreceptor for MHC class I molecule:peptide complex. The antigens presented by class I peptides are derived from cytosolic proteins while class II derived from extracellular proteins. Interacts simultaneously with the T-cell receptor (TCR) and the MHC class I proteins presented by antigen presenting cells (APCs). In turn, recruits the Src kinase LCK to the vicinity of the TCR-CD3 complex. A palmitoylation site in the cytoplasmic tail of CD8B chain contributes to partitioning of CD8 into the plasma membrane lipid rafts where signaling proteins are enriched. Once LCK recruited, it initiates different intracellular signaling pathways by phosphorylating various substrates ultimately leading to lymphokine production, motility, adhesion and activation of cytotoxic T-lymphocytes (CTLs). Additionally, plays a critical role in thymic selection of CD8+ T-cells. The polypeptide is T-cell surface glycoprotein CD8 beta chain (CD8B) (Felis catus (Cat)).